The sequence spans 288 residues: ATP synthase gamma chain (288 aa).

This sequence belongs to the ATPase gamma chain family. F-type ATPases have 2 components, CF(1) - the catalytic core - and CF(0) - the membrane proton channel. CF(1) has five subunits: alpha(3), beta(3), gamma(1), delta(1), epsilon(1). CF(0) has three main subunits: a, b and c.

Its subcellular location is the cell inner membrane. Functionally, produces ATP from ADP in the presence of a proton gradient across the membrane. The gamma chain is believed to be important in regulating ATPase activity and the flow of protons through the CF(0) complex. The sequence is that of ATP synthase gamma chain from Aeromonas hydrophila subsp. hydrophila (strain ATCC 7966 / DSM 30187 / BCRC 13018 / CCUG 14551 / JCM 1027 / KCTC 2358 / NCIMB 9240 / NCTC 8049).